The sequence spans 1523 residues: Slit homolog 3 protein (1523 aa).

An N-terminal signal peptide occupies residues 1-33; sequence MALGRTGAGAAVRARLALGLALASILSGPPAAA. In terms of domain architecture, LRRNT spans 34–61; the sequence is CPTKCTCSAASVDCHGLGLRAVPRGIPR. 6 LRR repeats span residues 62 to 83, 86 to 107, 110 to 131, 134 to 155, 158 to 179, and 182 to 203; these read NAER…DFAG, NLRV…AFQD, QLER…LFQS, KLTR…AFRG, GVKN…AFRA, and DLEI…SFNH. N-linked (GlcNAc...) asparagine glycosylation is present at N72. N192 carries N-linked (GlcNAc...) asparagine glycosylation. In terms of domain architecture, LRRCT 1 spans 215–265; the sequence is NHLYCDCHLAWLSDWLRQRRTIGQFTLCMAPVHLRGFSVADVQKKEYVCPG. An LRRNT 2 domain is found at 271–307; the sequence is PACNANSLSCPSACSCSNNIVDCRGKGLTEIPANLPE. C284 and C293 are disulfide-bonded. LRR repeat units lie at residues 308–329, 332–353, 356–377, 380–401, and 404–425; these read GIVE…AFTQ, KLKR…AFQG, SLTS…LFDG, SLQL…TFQD, and NLNL…LFVP. Residues 437–487 enclose the LRRCT 2 domain; sequence NPFVCDCHLKWLADYLQDNPIETSGARCSSPRRLANKRISQIKSKKFRCSG. Cystine bridges form between C441/C464, C443/C485, C505/C511, and C509/C518. The LRRNT 3 domain occupies 496 to 532; it reads SSECFMDLVCPEKCRCEGTIVDCSNQKLARIPSHLPE. 5 LRR repeats span residues 533 to 554, 558 to 579, 582 to 603, 606 to 627, and 630 to 651; these read YTTD…GIFK, NLRK…AFDG, GVQE…MFRG, SLKT…TFAG, and SVRL…AFTT. N-linked (GlcNAc...) asparagine glycosylation occurs at N563. N622 is a glycosylation site (N-linked (GlcNAc...) asparagine). In terms of domain architecture, LRRCT 3 spans 663 to 713; it reads NPFNCNCHMAWLGRWLRKRRIVSGNPRCQKPFFLKEIPIQDVAIQDFTCDG. Cystine bridges form between C667–C690 and C669–C711. Residues 716–752 form the LRRNT 4 domain; the sequence is ESSCQLSPRCPEQCTCVETVVRCSNRGLHALPKGMPK. 4 LRR repeats span residues 753 to 774, 776 to 797, 800 to 821, and 824 to 845; these read DVTE…LSAF, QLTL…TFSN, HLST…AFNG, and SLRV…SFND. N784, N792, and N797 each carry an N-linked (GlcNAc...) asparagine glycan. The region spanning 857–907 is the LRRCT 4 domain; the sequence is NPLHCDCSLRWLSEWVKAGYKEPGIARCSSPESMADRLLLTTPTHRFQCKG. EGF-like domains are found at residues 918-953, 955-994, 996-1032, 1034-1072, 1074-1110, and 1119-1155; these read NACL…KDCT, PINT…QRCE, NPDD…ELCD, VIDY…KLCE, NNDD…LFCE, and QTSP…PRCE. 18 disulfide bridges follow: C920-C931, C925-C941, C943-C952, C959-C970, C964-C982, C984-C993, C1000-C1011, C1005-C1020, C1022-C1031, C1038-C1051, C1045-C1060, C1062-C1071, C1078-C1089, C1083-C1098, C1100-C1109, C1123-C1134, C1128-C1143, and C1145-C1154. Residue N928 is glycosylated (N-linked (GlcNAc...) asparagine). N1025 carries N-linked (GlcNAc...) asparagine glycosylation. The region spanning 1158–1332 is the Laminin G-like domain; the sequence is ITVNFVGKDS…PQSLGVSPGC (175 aa). N-linked (GlcNAc...) asparagine glycans are attached at residues N1181 and N1247. 5 disulfide bridges follow: C1305–C1332, C1355–C1364, C1372–C1382, C1377–C1391, and C1393–C1402. EGF-like domains are found at residues 1340–1365 and 1368–1403; these read HGLC…PLCD and ARDP…ALCD. Residue N1406 is glycosylated (N-linked (GlcNAc...) asparagine). Positions 1408 to 1444 constitute an EGF-like 9 domain; the sequence is SASACSAFKCHHGQCHISDRGEPYCLCQPGFSGHHCE. 7 disulfides stabilise this stretch: C1412–C1422, C1417–C1432, C1434–C1443, C1449–C1487, C1467–C1501, C1478–C1517, and C1482–C1519. The region spanning 1449–1523 is the CTCK domain; that stretch reads CMGEIVREAI…HLECGCRACS (75 aa).

The protein localises to the secreted. Functionally, may act as molecular guidance cue in cellular migration, and function may be mediated by interaction with roundabout homolog receptors. The polypeptide is Slit homolog 3 protein (Slit3) (Mus musculus (Mouse)).